We begin with the raw amino-acid sequence, 291 residues long: ATP synthase gamma chain (291 aa).

Belongs to the ATPase gamma chain family. As to quaternary structure, F-type ATPases have 2 components, CF(1) - the catalytic core - and CF(0) - the membrane proton channel. CF(1) has five subunits: alpha(3), beta(3), gamma(1), delta(1), epsilon(1). CF(0) has three main subunits: a, b and c.

Its subcellular location is the cell membrane. Its function is as follows. Produces ATP from ADP in the presence of a proton gradient across the membrane. The gamma chain is believed to be important in regulating ATPase activity and the flow of protons through the CF(0) complex. This chain is ATP synthase gamma chain, found in Lachnoclostridium phytofermentans (strain ATCC 700394 / DSM 18823 / ISDg) (Clostridium phytofermentans).